The primary structure comprises 144 residues: Large ribosomal subunit protein uL13 (144 aa).

Belongs to the universal ribosomal protein uL13 family. As to quaternary structure, part of the 50S ribosomal subunit.

In terms of biological role, this protein is one of the early assembly proteins of the 50S ribosomal subunit, although it is not seen to bind rRNA by itself. It is important during the early stages of 50S assembly. The protein is Large ribosomal subunit protein uL13 of Nitrosomonas eutropha (strain DSM 101675 / C91 / Nm57).